The following is a 178-amino-acid chain: Ribosome maturation factor RimM (178 aa).

In terms of domain architecture, PRC barrel spans 101–178; it reads DGEYYWYQLQ…EMQVDWDADF (78 aa).

It belongs to the RimM family. As to quaternary structure, binds ribosomal protein uS19.

Its subcellular location is the cytoplasm. In terms of biological role, an accessory protein needed during the final step in the assembly of 30S ribosomal subunit, possibly for assembly of the head region. Essential for efficient processing of 16S rRNA. May be needed both before and after RbfA during the maturation of 16S rRNA. It has affinity for free ribosomal 30S subunits but not for 70S ribosomes. The sequence is that of Ribosome maturation factor RimM from Stutzerimonas stutzeri (strain A1501) (Pseudomonas stutzeri).